The following is a 115-amino-acid chain: MKFVLLFGVLLVTFFSYSSAEMLDDFDQADEDELLSLIEKGEARAKECTPRFYDCSHDRHSCCRSELFKDVCTCFYPEGGDNEVCTCQQPKHLKYMEKAADKAKKFGGKIKKWFG.

A signal peptide spans 1–20 (MKFVLLFGVLLVTFFSYSSA). Residues 21-44 (EMLDDFDQADEDELLSLIEKGEAR) constitute a propeptide that is removed on maturation. 4 disulfide bridges follow: cysteine 48–cysteine 63, cysteine 55–cysteine 72, cysteine 62–cysteine 87, and cysteine 74–cysteine 85.

Belongs to the neurotoxin 19 (CSTX) family. 01 subfamily. In terms of tissue distribution, expressed by the venom gland.

Its subcellular location is the secreted. The protein is U3-lycotoxin-Ls1a of Lycosa singoriensis (Wolf spider).